Here is a 459-residue protein sequence, read N- to C-terminus: MAPARTRVNSLNVAVIGAGAAGLVAARELRRENHTVVVFERDSKVGGLWVYTPNSEPDPLSLDPNRTIVHSSVYDSLRTNLPRECMGYRDFPFVPRPEDDESRDSRRYPSHREVLAYLEDFAREFKLVEMVRFKTEVVLVEPEDKKWRVQSKNSDGISKDEIFDAVVVCNGHYTEPRVAHVPGIDSWPGKQIHSHNYRVPDQFKDQVVVVIGNFASGADISRDITGVAKEVHIASRSNPSKTYSKLPGSNNLWLHSMIESVHEDGTIVFQNGKVVQADTIVHCTGYKYHFPFLNTNGYITVEDNCVGPLYEHVFPPALAPGLSFIGLPWMTLQFFMFELQSKWVAAALSGRVTLPSEEKMMEDVTAYYAKREAFGQPKRYTHRLGGGQVDYLNWIAEQIGAPPGEQWRYQEINGGYYRLATQSDTFRDKWDDDHLIVEAYEDFLRQKLISSLPSQLLES.

17 to 22 (GAGAAG) contacts FAD. 212–217 (GNFASG) is an NADP(+) binding site.

It belongs to the FMO family.

It carries out the reaction a (Z)-omega-(methylsulfanyl)-N-sulfo-alkylhydroximate S-glucoside + NADPH + O2 + H(+) = a (Z)-omega-(methylsulfinyl)-alkyl-glucosinolate + NADP(+) + H2O. Catalyzes the conversion of methylthioalkyl glucosinolates into methylsulfinylalkyl glucosinolates. Specific for 8-methylthiooctyl (8-MTO) glucosinolates. The sequence is that of Flavin-containing monooxygenase FMO GS-OX5 (FMOGS-OX5) from Arabidopsis thaliana (Mouse-ear cress).